Reading from the N-terminus, the 211-residue chain is Envelope glycoprotein (211 aa).

At 1–151 the chain is on the extracellular side; the sequence is QFKRRAKYKR…FNKSPWFTTL (151 aa). The interval 13 to 33 is fusion peptide; it reads VSLTLALLLGGLTMGGIAAGV. 2 coiled-coil regions span residues 41–90 and 100–136; these read VATQ…LLFL and KEEC…SQQG. The segment at 79–95 is immunosuppression; that stretch reads LQNRRGLDLLFLKEGGL. Residues 96–104 carry the CX6CC motif; that stretch reads CAALKEECC. A helical membrane pass occupies residues 152 to 172; it reads ISTIMGPLIILLLILLFGPCI. Cys171 carries S-palmitoyl cysteine; by host lipidation. Topologically, residues 173 to 211 are cytoplasmic; sequence LNRLVQFIKDRISVVQALVLTQQYHQLKSIDPEKVESRE. A YXXL motif; contains endocytosis signal motif is present at residues 196-199; that stretch reads YHQL.

As to quaternary structure, the mature envelope protein (Env) consists of a trimer of SU-TM heterodimers attached by a labile interchain disulfide bond. Specific enzymatic cleavages in vivo yield mature proteins. Envelope glycoproteins are synthesized as an inactive precursor that is N-glycosylated and processed likely by host cell furin or by a furin-like protease in the Golgi to yield the mature SU and TM proteins. The cleavage site between SU and TM requires the minimal sequence [KR]-X-[KR]-R. The R-peptide is released from the C-terminus of the cytoplasmic tail of the TM protein upon particle formation as a result of proteolytic cleavage by the viral protease. Cleavage of this peptide is required for TM to become fusogenic. In terms of processing, the CXXC motif is highly conserved across a broad range of retroviral envelope proteins. It is thought to participate in the formation of a labile disulfide bond possibly with the CX6CC motif present in the transmembrane protein. Isomerization of the intersubunit disulfide bond to an SU intrachain disulfide bond is thought to occur upon receptor recognition in order to allow membrane fusion. Post-translationally, the transmembrane protein is palmitoylated. The R-peptide is palmitoylated.

The protein resides in the virion membrane. The protein localises to the host cell membrane. In terms of biological role, the surface protein (SU) attaches the virus to the host cell by binding to its receptor. This interaction triggers the refolding of the transmembrane protein (TM) and is thought to activate its fusogenic potential by unmasking its fusion peptide. Fusion occurs at the host cell plasma membrane. Its function is as follows. The transmembrane protein (TM) acts as a class I viral fusion protein. Under the current model, the protein has at least 3 conformational states: pre-fusion native state, pre-hairpin intermediate state, and post-fusion hairpin state. During viral and target cell membrane fusion, the coiled coil regions (heptad repeats) assume a trimer-of-hairpins structure, positioning the fusion peptide in close proximity to the C-terminal region of the ectodomain. The formation of this structure appears to drive apposition and subsequent fusion of viral and target cell membranes. Membranes fusion leads to delivery of the nucleocapsid into the cytoplasm. In Mus musculus (Mouse), this protein is Envelope glycoprotein (env).